A 601-amino-acid chain; its full sequence is DNA mismatch repair protein MutL (601 aa).

The protein belongs to the DNA mismatch repair MutL/HexB family.

Functionally, this protein is involved in the repair of mismatches in DNA. It is required for dam-dependent methyl-directed DNA mismatch repair. May act as a 'molecular matchmaker', a protein that promotes the formation of a stable complex between two or more DNA-binding proteins in an ATP-dependent manner without itself being part of a final effector complex. This chain is DNA mismatch repair protein MutL, found in Listeria monocytogenes serovar 1/2a (strain ATCC BAA-679 / EGD-e).